Here is a 246-residue protein sequence, read N- to C-terminus: Sulfate transporter CysZ (246 aa).

4 consecutive transmembrane segments (helical) span residues 24–44 (LFVL…IGFA), 69–89 (IVWP…FTMV), 148–168 (LLVL…WILF), and 214–234 (LLIP…ATLF).

Belongs to the CysZ family.

It localises to the cell inner membrane. In terms of biological role, high affinity, high specificity proton-dependent sulfate transporter, which mediates sulfate uptake. Provides the sulfur source for the cysteine synthesis pathway. This is Sulfate transporter CysZ from Pseudomonas aeruginosa (strain LESB58).